We begin with the raw amino-acid sequence, 713 residues long: Acetyl-coenzyme A synthetase 1 (713 aa).

Residues 1-39 (MSPSAVQSSKLEEQSSEIDKLKAKMSQSAATAQQKKEHE) form a disordered region. Basic and acidic residues predominate over residues 10–22 (KLEEQSSEIDKLK). CoA contacts are provided by residues 248–251 (RGGK) and threonine 367. ATP contacts are provided by residues 443–445 (GEP), 467–472 (DTYWQT), aspartate 559, and arginine 574. Residues 552 to 600 (PGYYFTGDGAAKDKDGYIWILGRVDDVVNVSGHRLSTAEIEAAIIEDPI) carry the FACS motif. CoA is bound at residue serine 582. ATP is bound at residue arginine 585. Arginine 650 is a binding site for CoA. The Microbody targeting signal motif lies at 711 to 713 (VKL).

This sequence belongs to the ATP-dependent AMP-binding enzyme family.

Its subcellular location is the microsome. The protein resides in the cytoplasm. The protein localises to the mitochondrion. It is found in the nucleus. It catalyses the reaction acetate + ATP + CoA = acetyl-CoA + AMP + diphosphate. In terms of biological role, catalyzes the production of acetyl-CoA. Provides the acetyl-CoA source for histone acetylation in the nucleus. 'Aerobic' isozyme of acetyl-coenzyme A synthetase, which supports growth on nonfermentable carbon sources such as glycerol and ethanol. May be required for assimilation of ethanol and acetate. This chain is Acetyl-coenzyme A synthetase 1 (ACS1), found in Saccharomyces cerevisiae (strain ATCC 204508 / S288c) (Baker's yeast).